The following is a 270-amino-acid chain: DNA packaging protein OPG160 (270 aa).

Residue 25–32 (GGSGSGKT) participates in ATP binding.

This sequence belongs to the orthopoxvirus OPG160 protein family. As to quaternary structure, interacts with protein OPG137.

In terms of biological role, participates in viral DNA packaging and virion morphogenesis. The chain is DNA packaging protein OPG160 (OPG160) from Variola virus (isolate Human/India/Ind3/1967) (VARV).